The chain runs to 25 residues: Glucomannokinase (25 aa).

It belongs to the ROK (NagC/XylR) family. Homodimer.

It carries out the reaction D-glucose + ATP = D-glucose 6-phosphate + ADP + H(+). The catalysed reaction is D-mannose + ATP = D-mannose 6-phosphate + ADP + H(+). The protein operates within carbohydrate degradation; glycolysis; D-glyceraldehyde 3-phosphate and glycerone phosphate from D-glucose: step 1/4. It participates in carbohydrate metabolism; mannose metabolism. Competitively inhibited by 2-deoxy-glucose. In terms of biological role, the enzyme has great affinity for glucose and mannose. This chain is Glucomannokinase, found in Segatella bryantii (Prevotella bryantii).